A 118-amino-acid chain; its full sequence is MDDSKVSGGKVKKPGKRGRKPAKIDLKAKLERSRQSARECRARKKLRYQYLEELVSSRERAICALREELEMYKQWCAAMDQGKIPSEIKALLSGEDLKAAPNQVKHRAVKTEQKEKCP.

The tract at residues 1-25 is disordered; the sequence is MDDSKVSGGKVKKPGKRGRKPAKID. Residues 10 to 21 show a composition bias toward basic residues; sequence KVKKPGKRGRKP. The bZIP domain maps to 23-86; it reads KIDLKAKLER…AAMDQGKIPS (64 aa). The tract at residues 29 to 60 is basic motif; sequence KLERSRQSARECRARKKLRYQYLEELVSSRER. The tract at residues 62 to 69 is leucine-zipper; sequence ICALREEL.

This sequence belongs to the bZIP family. ATF subfamily.

It is found in the nucleus. In terms of biological role, probable regulator of creb1 transcriptional activity which is involved in adipose cells differentiation. May also play a regulatory role in the cell cycle. In Xenopus tropicalis (Western clawed frog), this protein is cAMP-responsive element-binding protein-like 2 (crebl2).